We begin with the raw amino-acid sequence, 442 residues long: 23S rRNA (uracil(1939)-C(5))-methyltransferase RlmD (442 aa).

Residues 12-70 enclose the TRAM domain; the sequence is SKQLSAKVTLEVTKLDHLGAGMAQHQGKIVFIPGALPNEKVTVQLTEQKKRHARAKLLK. Residues Cys-83, Cys-89, Cys-92, and Cys-171 each contribute to the [4Fe-4S] cluster site. Positions 276, 305, 310, 326, 353, and 373 each coordinate S-adenosyl-L-methionine. Cys-399 acts as the Nucleophile in catalysis.

The protein belongs to the class I-like SAM-binding methyltransferase superfamily. RNA M5U methyltransferase family. RlmD subfamily.

It carries out the reaction uridine(1939) in 23S rRNA + S-adenosyl-L-methionine = 5-methyluridine(1939) in 23S rRNA + S-adenosyl-L-homocysteine + H(+). Functionally, catalyzes the formation of 5-methyl-uridine at position 1939 (m5U1939) in 23S rRNA. The polypeptide is 23S rRNA (uracil(1939)-C(5))-methyltransferase RlmD (Shewanella sediminis (strain HAW-EB3)).